A 255-amino-acid chain; its full sequence is Flap endonuclease Xni (255 aa).

D105 lines the Mg(2+) pocket. Positions E162–N254 constitute a 5'-3' exonuclease domain. 5 residues coordinate K(+): L172, A173, P181, V183, and I186. An interaction with DNA region spans residues G185–S190.

This sequence belongs to the Xni family. It depends on Mg(2+) as a cofactor. K(+) is required as a cofactor.

Has flap endonuclease activity. During DNA replication, flap endonucleases cleave the 5'-overhanging flap structure that is generated by displacement synthesis when DNA polymerase encounters the 5'-end of a downstream Okazaki fragment. This is Flap endonuclease Xni from Shewanella piezotolerans (strain WP3 / JCM 13877).